We begin with the raw amino-acid sequence, 651 residues long: J domain-containing protein required for chloroplast accumulation response 1 (651 aa).

The span at 1-17 (MQTLPSSETVLLGSNSA) shows a compositional bias: polar residues. Disordered stretches follow at residues 1 to 56 (MQTL…TRHS), 114 to 138 (GSRI…QFSL), 156 to 176 (LNKN…SKAD), 250 to 291 (KLGK…TDLK), and 308 to 526 (KPLD…IDEP). Ser-56 carries the phosphoserine modification. Over residues 126–137 (SSSGTSSPSQFS) the composition is skewed to low complexity. 6 stretches are compositionally biased toward basic and acidic residues: residues 250-259 (KLGKNEEGDG), 281-291 (TKEEKTETDLK), 337-357 (IFHE…EVRK), 405-416 (VGKDGVKGKVSD), 441-456 (RAKE…DGSN), and 488-497 (QKKDSDRESM). Residues 532 to 562 (DVEDITQDENKMEEANKDAEEIKNIDAKIRK) are a coiled coil. Positions 586-651 (SGWKPVPLMD…WDHFNTLGPV (66 aa)) constitute a J domain.

In terms of tissue distribution, expressed in leaves and stems, but not in roots.

It localises to the cytoplasm. Required for chloroplast photorelocation movement; chloroplast accumulation upon low blue light and for chloroplast movement to the bottom of cells in darkness, by modulating chloroplast actin (Cp-actin) filaments distribution, appearance and disappearance. May mediate a slight resistance to aluminum in root hair cells. This Arabidopsis thaliana (Mouse-ear cress) protein is J domain-containing protein required for chloroplast accumulation response 1 (JAC1).